We begin with the raw amino-acid sequence, 257 residues long: Imidazole glycerol phosphate synthase subunit HisF (257 aa).

Residues aspartate 11 and aspartate 130 contribute to the active site.

The protein belongs to the HisA/HisF family. Heterodimer of HisH and HisF.

It localises to the cytoplasm. It carries out the reaction 5-[(5-phospho-1-deoxy-D-ribulos-1-ylimino)methylamino]-1-(5-phospho-beta-D-ribosyl)imidazole-4-carboxamide + L-glutamine = D-erythro-1-(imidazol-4-yl)glycerol 3-phosphate + 5-amino-1-(5-phospho-beta-D-ribosyl)imidazole-4-carboxamide + L-glutamate + H(+). It participates in amino-acid biosynthesis; L-histidine biosynthesis; L-histidine from 5-phospho-alpha-D-ribose 1-diphosphate: step 5/9. IGPS catalyzes the conversion of PRFAR and glutamine to IGP, AICAR and glutamate. The HisF subunit catalyzes the cyclization activity that produces IGP and AICAR from PRFAR using the ammonia provided by the HisH subunit. This is Imidazole glycerol phosphate synthase subunit HisF from Shewanella denitrificans (strain OS217 / ATCC BAA-1090 / DSM 15013).